We begin with the raw amino-acid sequence, 313 residues long: tRNA dimethylallyltransferase (313 aa).

9–16 (GPTASGKT) contributes to the ATP binding site. Position 11–16 (11–16 (TASGKT)) interacts with substrate. Positions 34 to 37 (DSMQ) are interaction with substrate tRNA.

The protein belongs to the IPP transferase family. In terms of assembly, monomer. The cofactor is Mg(2+).

The catalysed reaction is adenosine(37) in tRNA + dimethylallyl diphosphate = N(6)-dimethylallyladenosine(37) in tRNA + diphosphate. Functionally, catalyzes the transfer of a dimethylallyl group onto the adenine at position 37 in tRNAs that read codons beginning with uridine, leading to the formation of N6-(dimethylallyl)adenosine (i(6)A). In Acetivibrio thermocellus (strain ATCC 27405 / DSM 1237 / JCM 9322 / NBRC 103400 / NCIMB 10682 / NRRL B-4536 / VPI 7372) (Clostridium thermocellum), this protein is tRNA dimethylallyltransferase.